The primary structure comprises 961 residues: DNA replication licensing factor MCM2 (961 aa).

Positions 1 to 17 (MDDSENNAPSTPGSPGF) are enriched in polar residues. Disordered regions lie at residues 1 to 81 (MDDS…FNDN) and 120 to 220 (AEAE…EEDE). Residues 39-78 (SDDDDDDVVGAEEAEVDPNVLPEDDGVVAAEEEEDGEDLF) show a composition bias toward acidic residues. Basic and acidic residues-rich tracts occupy residues 120-146 (AEAE…LHDQ) and 166-176 (PPREPRTPRSD). Residues 205–220 (QTDDDPYEDEFDEEDE) show a composition bias toward acidic residues. A C4-type zinc finger spans residues 380–406 (CSKCGTVLGPFFQNSYTEVKVGSCPEC). An MCM domain is found at 524-730 (IGERIVKSIA…FTDEMLARFV (207 aa)). Residue 574 to 581 (GDPGTAKS) coordinates ATP. Positions 706–709 (SRFD) match the Arginine finger motif.

The protein belongs to the MCM family. Component of the minichromosome maintenance (MCM) complex, a heterotetramer composed of MCM2, MCM3, MCM4, MCM5, MCM6 and MCM7. Interacts with CSN5. As to expression, widely expressed, with higher expression in developing tissues.

It is found in the nucleus. The enzyme catalyses ATP + H2O = ADP + phosphate + H(+). In terms of biological role, probable component of the MCM2-7 complex (MCM complex) that may function as a DNA helicase and which is essential to undergo a single round of replication initiation and elongation per cell cycle in eukaryotic cells. Can complement the fission yeast mcm2 mutant. The polypeptide is DNA replication licensing factor MCM2 (Oryza sativa subsp. japonica (Rice)).